We begin with the raw amino-acid sequence, 490 residues long: Cytochrome P450 2C50 (490 aa).

Serine 127 is subject to Phosphoserine. N6-acetyllysine is present on residues lysine 249 and lysine 375. A heme-binding site is contributed by cysteine 435.

It belongs to the cytochrome P450 family. Heme is required as a cofactor. In terms of tissue distribution, expressed in heart and liver.

Its subcellular location is the endoplasmic reticulum membrane. The protein resides in the microsome membrane. The catalysed reaction is an organic molecule + reduced [NADPH--hemoprotein reductase] + O2 = an alcohol + oxidized [NADPH--hemoprotein reductase] + H2O + H(+). In terms of biological role, metabolizes arachidonic acid to several midchain and omega-terminal hydroxyeicosatetraenoic acids (HETE). In Mus musculus (Mouse), this protein is Cytochrome P450 2C50.